The chain runs to 190 residues: Xanthine phosphoribosyltransferase (190 aa).

2 residues coordinate xanthine: Leu20 and Asn27. 128 to 132 contributes to the 5-phospho-alpha-D-ribose 1-diphosphate binding site; that stretch reads ANGQA. Lys156 serves as a coordination point for xanthine.

Belongs to the purine/pyrimidine phosphoribosyltransferase family. Xpt subfamily. Homodimer.

Its subcellular location is the cytoplasm. The catalysed reaction is XMP + diphosphate = xanthine + 5-phospho-alpha-D-ribose 1-diphosphate. Its pathway is purine metabolism; XMP biosynthesis via salvage pathway; XMP from xanthine: step 1/1. Converts the preformed base xanthine, a product of nucleic acid breakdown, to xanthosine 5'-monophosphate (XMP), so it can be reused for RNA or DNA synthesis. In Pediococcus pentosaceus (strain ATCC 25745 / CCUG 21536 / LMG 10740 / 183-1w), this protein is Xanthine phosphoribosyltransferase.